Here is a 156-residue protein sequence, read N- to C-terminus: MKCPYCGETEDKVIDSRQGKEADVIRRRRECLSCSRRFTTYEKVEDMPLVIIKKDGRREVFNGEKVRAGMLRACEKRNISVHVIDEFIEQLERDLRETGEKEVPSHQVGEAIMNKLHELDDVAYVRFASVYREFKHVNDFISELKYLLKQQQKGGK.

Residues 3–34 (CPYCGETEDKVIDSRQGKEADVIRRRRECLSC) fold into a zinc finger. An ATP-cone domain is found at 49–139 (LVIIKKDGRR…VYREFKHVND (91 aa)).

The protein belongs to the NrdR family. The cofactor is Zn(2+).

In terms of biological role, negatively regulates transcription of bacterial ribonucleotide reductase nrd genes and operons by binding to NrdR-boxes. This is Transcriptional repressor NrdR from Desulfatibacillum aliphaticivorans.